A 336-amino-acid chain; its full sequence is Holliday junction branch migration complex subunit RuvB (336 aa).

The tract at residues 1-180 (MRRTGIRLSW…FGIVEHLEYY (180 aa)) is large ATPase domain (RuvB-L). ATP-binding positions include L18, R19, G60, K63, T64, T65, 127-129 (EDF), R170, Y180, and R217. T64 serves as a coordination point for Mg(2+). The segment at 181 to 251 (TPEELAQGVM…RALEALAALG (71 aa)) is small ATPAse domain (RuvB-S). A head domain (RuvB-H) region spans residues 254–336 (ELGLEKRDRE…PPPVGPLLEP (83 aa)). DNA contacts are provided by R309 and R314.

Belongs to the RuvB family. In terms of assembly, homohexamer. Forms an RuvA(8)-RuvB(12)-Holliday junction (HJ) complex. HJ DNA is sandwiched between 2 RuvA tetramers; dsDNA enters through RuvA and exits via RuvB. An RuvB hexamer assembles on each DNA strand where it exits the tetramer. Each RuvB hexamer is contacted by two RuvA subunits (via domain III) on 2 adjacent RuvB subunits; this complex drives branch migration. In the full resolvosome a probable DNA-RuvA(4)-RuvB(12)-RuvC(2) complex forms which resolves the HJ.

The protein resides in the cytoplasm. It catalyses the reaction ATP + H2O = ADP + phosphate + H(+). The RuvA-RuvB-RuvC complex processes Holliday junction (HJ) DNA during genetic recombination and DNA repair, while the RuvA-RuvB complex plays an important role in the rescue of blocked DNA replication forks via replication fork reversal (RFR). RuvA specifically binds to HJ cruciform DNA, conferring on it an open structure. The RuvB hexamer acts as an ATP-dependent pump, pulling dsDNA into and through the RuvAB complex. RuvB forms 2 homohexamers on either side of HJ DNA bound by 1 or 2 RuvA tetramers; 4 subunits per hexamer contact DNA at a time. Coordinated motions by a converter formed by DNA-disengaged RuvB subunits stimulates ATP hydrolysis and nucleotide exchange. Immobilization of the converter enables RuvB to convert the ATP-contained energy into a lever motion, pulling 2 nucleotides of DNA out of the RuvA tetramer per ATP hydrolyzed, thus driving DNA branch migration. The RuvB motors rotate together with the DNA substrate, which together with the progressing nucleotide cycle form the mechanistic basis for DNA recombination by continuous HJ branch migration. Branch migration allows RuvC to scan DNA until it finds its consensus sequence, where it cleaves and resolves cruciform DNA. This is Holliday junction branch migration complex subunit RuvB from Thermus thermophilus (strain ATCC BAA-163 / DSM 7039 / HB27).